A 419-amino-acid polypeptide reads, in one-letter code: Tyrosine--tRNA ligase (419 aa).

Tyrosine 34 contributes to the L-tyrosine binding site. Positions 39-48 match the 'HIGH' region motif; that stretch reads PTADSLHIGN. L-tyrosine contacts are provided by tyrosine 169 and glutamine 173. The 'KMSKS' region signature appears at 230 to 234; it reads KFGKT. Position 233 (lysine 233) interacts with ATP. Residues 352-419 enclose the S4 RNA-binding domain; it reads VPLVELLVSA…KKKYYLIRYA (68 aa).

The protein belongs to the class-I aminoacyl-tRNA synthetase family. TyrS type 1 subfamily. Homodimer.

It is found in the cytoplasm. It carries out the reaction tRNA(Tyr) + L-tyrosine + ATP = L-tyrosyl-tRNA(Tyr) + AMP + diphosphate + H(+). Catalyzes the attachment of tyrosine to tRNA(Tyr) in a two-step reaction: tyrosine is first activated by ATP to form Tyr-AMP and then transferred to the acceptor end of tRNA(Tyr). The polypeptide is Tyrosine--tRNA ligase (Geobacillus kaustophilus (strain HTA426)).